Here is a 372-residue protein sequence, read N- to C-terminus: Peptide chain release factor 2 (372 aa).

Gln253 carries the N5-methylglutamine modification.

It belongs to the prokaryotic/mitochondrial release factor family. In terms of processing, methylated by PrmC. Methylation increases the termination efficiency of RF2.

The protein localises to the cytoplasm. Its function is as follows. Peptide chain release factor 2 directs the termination of translation in response to the peptide chain termination codons UGA and UAA. This Mycolicibacterium gilvum (strain PYR-GCK) (Mycobacterium gilvum (strain PYR-GCK)) protein is Peptide chain release factor 2.